Here is a 406-residue protein sequence, read N- to C-terminus: GTPase Obg (406 aa).

Positions 1-159 (MKFVDEVSIH…RDLKLELKVL (159 aa)) constitute an Obg domain. Residues 127–148 (NTRFKSSTNRAPRQTTPGKPGE) are disordered. Over residues 129 to 143 (RFKSSTNRAPRQTTP) the composition is skewed to polar residues. An OBG-type G domain is found at 160–334 (ADVGLLGLPN…LSQDIMRYLD (175 aa)). GTP contacts are provided by residues 166–173 (GLPNAGKS), 191–195 (FTTLV), 213–216 (DIPG), 283–286 (NKMD), and 315–317 (SAL). Mg(2+) contacts are provided by Ser173 and Thr193. The segment at 382–406 (AGAVDDDDFDDEEDDGDGPEIFYVP) is disordered. Acidic residues predominate over residues 385-399 (VDDDDFDDEEDDGDG).

It belongs to the TRAFAC class OBG-HflX-like GTPase superfamily. OBG GTPase family. In terms of assembly, monomer. It depends on Mg(2+) as a cofactor.

It localises to the cytoplasm. In terms of biological role, an essential GTPase which binds GTP, GDP and possibly (p)ppGpp with moderate affinity, with high nucleotide exchange rates and a fairly low GTP hydrolysis rate. Plays a role in control of the cell cycle, stress response, ribosome biogenesis and in those bacteria that undergo differentiation, in morphogenesis control. This chain is GTPase Obg, found in Pseudomonas aeruginosa (strain LESB58).